A 210-amino-acid polypeptide reads, in one-letter code: Transmembrane protein 61 (210 aa).

2 consecutive transmembrane segments (helical) span residues 18–38 and 69–89; these read YCMT…FAWW and VSFV…LWSV. The disordered stretch occupies residues 140–172; sequence VAEGPPTPPAYPTEEALEPSGSRDALLSTQPAW.

It is found in the membrane. The sequence is that of Transmembrane protein 61 (TMEM61) from Homo sapiens (Human).